Here is a 921-residue protein sequence, read N- to C-terminus: Probable serine/threonine-protein kinase DDB_G0275165 (921 aa).

The region spanning 23 to 277 is the Protein kinase domain; that stretch reads FDPLSIIGSG…SNILGLLEYI (255 aa). Residues 29-37 and Lys50 contribute to the ATP site; that span reads IGSGGFGKV. Asp147 (proton acceptor) is an active-site residue. Disordered regions lie at residues 289 to 453, 465 to 492, 530 to 571, 583 to 653, 671 to 698, 737 to 813, 833 to 858, and 877 to 921; these read DYEP…SFPR, RGEEEPLVVSQKDQLEHDLEGGDDNEED, RPWN…SDSN, NPTP…PTTI, STATAQPKSRSNSNPPKPTVVISNSNNN, IQPL…SRSL, SSQQSNLVHQPSSSSSSTKQPPTSQF, and FEKS…KPKK. 3 stretches are compositionally biased toward low complexity: residues 310-352, 400-412, and 429-445; these read NNNN…NNNN, SNINGGVNNNNSN, and NINGCVNNNNNNSNNNN. Composition is skewed to low complexity over residues 539-550 and 583-638; these read NNNNKNNNNNEK and NPTP…SLSS. Positions 643–653 are enriched in polar residues; it reads PQSTYKVPTTI. Low complexity-rich tracts occupy residues 748-775, 842-857, and 892-910; these read TVAATTATTPTTATSTTIKSSPTTPTST, QPSSSSSSTKQPPTSQ, and TSSSLTSNSNSSIPAPSSP.

It belongs to the protein kinase superfamily. TKL Ser/Thr protein kinase family.

The enzyme catalyses L-seryl-[protein] + ATP = O-phospho-L-seryl-[protein] + ADP + H(+). The catalysed reaction is L-threonyl-[protein] + ATP = O-phospho-L-threonyl-[protein] + ADP + H(+). The sequence is that of Probable serine/threonine-protein kinase DDB_G0275165 from Dictyostelium discoideum (Social amoeba).